Consider the following 338-residue polypeptide: Fructose-1,6-bisphosphatase class 1 1 (338 aa).

Residues Glu-91, Asp-113, Leu-115, and Asp-116 each contribute to the Mg(2+) site. Substrate is bound by residues Asp-116–Ser-119, Asn-208, and Lys-274. A Mg(2+)-binding site is contributed by Glu-280.

This sequence belongs to the FBPase class 1 family. Homotetramer. The cofactor is Mg(2+).

It localises to the cytoplasm. The catalysed reaction is beta-D-fructose 1,6-bisphosphate + H2O = beta-D-fructose 6-phosphate + phosphate. The protein operates within carbohydrate biosynthesis; gluconeogenesis. The chain is Fructose-1,6-bisphosphatase class 1 1 from Cupriavidus metallidurans (strain ATCC 43123 / DSM 2839 / NBRC 102507 / CH34) (Ralstonia metallidurans).